The following is a 710-amino-acid chain: multidrug resistance regulator 2 (710 aa).

The segment at residues 11–37 is a DNA-binding region (zn(2)-C6 fungal-type); sequence CDACRSRKIKCNRQTPCASCHKSKRDC. 2 helical membrane passes run 475-495 and 525-545; these read DLVIFSVNFLLVYMYYSLYLF and LFLAYFNLNYIHLVLMITNFL.

Its subcellular location is the nucleus. It is found in the membrane. Functionally, transcription factor that controls the expression of CDR1, the major multidrug efflux pump. Required for yeast cell adherence to silicone substrate and plays a role in virulence. The sequence is that of multidrug resistance regulator 2 from Candida albicans (strain SC5314 / ATCC MYA-2876) (Yeast).